The following is a 74-amino-acid chain: Conotoxin VnMEKL-0221 (74 aa).

An N-terminal signal peptide occupies residues 1–19; the sequence is MEKLTILLLVAAVLMWTQA. Positions 20–46 are excised as a propeptide; it reads LIQEKRPKEKIKFLSKRKTTAESWWEG. 3 disulfides stabilise this stretch: C48–C62, C55–C66, and C61–C71.

It belongs to the conotoxin O2 superfamily. In terms of tissue distribution, expressed by the venom duct.

The protein resides in the secreted. This Conus ventricosus (Mediterranean cone) protein is Conotoxin VnMEKL-0221.